The following is a 423-amino-acid chain: tRNA-dihydrouridine(16/17) synthase [NAD(P)(+)] (423 aa).

Thr-2 carries the post-translational modification N-acetylthreonine. FMN contacts are provided by residues 35–37 (PMV) and Gln-92. Residue Cys-121 is the Proton donor of the active site. Residues Lys-160, His-188, 223-225 (NGN), and 247-248 (AE) each bind FMN. Residues 404–423 (KKRKADVPLESADKKKDVKA) form a disordered region. The segment covering 408-423 (ADVPLESADKKKDVKA) has biased composition (basic and acidic residues).

Belongs to the Dus family. Dus1 subfamily. In terms of assembly, monomer. Requires FMN as cofactor.

It catalyses the reaction 5,6-dihydrouridine(16) in tRNA + NADP(+) = uridine(16) in tRNA + NADPH + H(+). The enzyme catalyses 5,6-dihydrouridine(16) in tRNA + NAD(+) = uridine(16) in tRNA + NADH + H(+). The catalysed reaction is 5,6-dihydrouridine(17) in tRNA + NAD(+) = uridine(17) in tRNA + NADH + H(+). It carries out the reaction 5,6-dihydrouridine(17) in tRNA + NADP(+) = uridine(17) in tRNA + NADPH + H(+). It catalyses the reaction a 5,6-dihydrouridine in mRNA + NAD(+) = a uridine in mRNA + NADH + H(+). The enzyme catalyses a 5,6-dihydrouridine in mRNA + NADP(+) = a uridine in mRNA + NADPH + H(+). Functionally, catalyzes the synthesis of dihydrouridine, a modified base found in the D-loop of most tRNAs. Specifically modifies U16 and U17 in cytoplasmic tRNAs. Also able to mediate dihydrouridylation of some mRNAs, thereby affecting their translation. The chain is tRNA-dihydrouridine(16/17) synthase [NAD(P)(+)] from Saccharomyces cerevisiae (strain ATCC 204508 / S288c) (Baker's yeast).